A 280-amino-acid chain; its full sequence is MDIEVDIIEFKVPLENNKTIFIWDIQPTFTEAYIYESLWSVYSAFGDLYLLKVCPNATVAEPGFYALVKFYSSAQASKAQRATDKQCLFQSSPLKVRLSTKQNLSFYSSKPLCLSKCHNLANHYLGFGGWTTRIVTLKDLSNCVDAGCQEETGDQGVLLKYGCIMELSFPHHGMSCQGVGVAEEVLDSDQDPEEKLRKRGALMKRAKDKAMEVAFEKVLLLILGNGKVAIEIKIDPDEIVPEENSERVIKVNDISWTHIESADSNAEEDFLWDLTEDLPY.

Positions 18-101 constitute an RRM domain; it reads KTIFIWDIQP…SPLKVRLSTK (84 aa).

Homodimer.

It is found in the nucleus. The protein resides in the cytoplasm. It localises to the nucleolus. Its function is as follows. May confer resistance to the antitumor agent cisplatin. Binds to DNA and RNA. This chain is RAD52 motif-containing protein 1 (rdm1), found in Danio rerio (Zebrafish).